The primary structure comprises 257 residues: MLTVLSPAKRLAARPRLDLPRGLSPTSPRFQNEADELAAVARGLTAADLRRLMHISEPLARLNVARFAEFHEARTAAVPALALFDGDTYAGLEARTLDEDALRWAQDRVCILSGLYGLLRPLDLIQPHRLEMGTRLKTARGVSLYEFWGDRIALALNERATKTGARALINCASAEYFSAVDLEALSLPVISPVFLEEREGERRIVSFWAKRSRGAMARFIAENRLEHPEEILSFRAGGYAFEPDLSTDDRPVFLRTA.

This sequence belongs to the UPF0246 family.

This Cereibacter sphaeroides (strain ATCC 17025 / ATH 2.4.3) (Rhodobacter sphaeroides) protein is UPF0246 protein Rsph17025_0016.